Consider the following 280-residue polypeptide: 2-dehydro-3-deoxyphosphooctonate aldolase (280 aa).

Belongs to the KdsA family.

Its subcellular location is the cytoplasm. The catalysed reaction is D-arabinose 5-phosphate + phosphoenolpyruvate + H2O = 3-deoxy-alpha-D-manno-2-octulosonate-8-phosphate + phosphate. It functions in the pathway carbohydrate biosynthesis; 3-deoxy-D-manno-octulosonate biosynthesis; 3-deoxy-D-manno-octulosonate from D-ribulose 5-phosphate: step 2/3. It participates in bacterial outer membrane biogenesis; lipopolysaccharide biosynthesis. This is 2-dehydro-3-deoxyphosphooctonate aldolase from Coxiella burnetii (strain CbuG_Q212) (Coxiella burnetii (strain Q212)).